The primary structure comprises 147 residues: MVPISIIRNRVAKVAVGSAAVLGLAVGFQTPAVAAAPTATVTPSSGLSDGTVVKVAGAGLQAGTAYDVGQCAWVDTGVLACNPADFSSVTADANGSASTSLTVRRSFEGFLFDGTRWGTVDCTTAACQVGLSDAAGNGPEGVAISFN.

An N-terminal signal peptide occupies residues 1 to 34 (MVPISIIRNRVAKVAVGSAAVLGLAVGFQTPAVA). 2 disulfide bridges follow: Cys-71–Cys-81 and Cys-122–Cys-127.

This sequence belongs to the neocarzinostatin family.

Its function is as follows. NCS has antibiotic activity (for Gram-positive bacteria) and antitumor activity (for certain mouse tumors). NCS binds non-covalently to a chromophore which is the cytotoxic and mutagenic component of the antibiotic. The chromophore binds to DNA as a weak intercalator and causes single- and double-strand breaks. This is Neocarzinostatin (ncsA) from Streptomyces carzinostaticus.